The sequence spans 62 residues: Large ribosomal subunit protein eL24 (62 aa).

Residues cysteine 7, cysteine 10, cysteine 33, and cysteine 37 each contribute to the Zn(2+) site. The C4-type zinc finger occupies 7 to 37 (CDYCGDDIEPGTGTMFVHNDGSTVHFCSAKC).

This sequence belongs to the eukaryotic ribosomal protein eL24 family. In terms of assembly, part of the 50S ribosomal subunit. Forms a cluster with proteins L3 and L14. Zn(2+) is required as a cofactor.

Binds to the 23S rRNA. The chain is Large ribosomal subunit protein eL24 from Halobacterium salinarum (strain ATCC 29341 / DSM 671 / R1).